Here is a 335-residue protein sequence, read N- to C-terminus: DNA-directed RNA polymerase subunit alpha (335 aa).

An alpha N-terminal domain (alpha-NTD) region spans residues 1-248 (MTIQTSRTLS…GLFAPLQEVS (248 aa)). The alpha C-terminal domain (alpha-CTD) stretch occupies residues 256–335 (KPDEDNQKNQ…LPRTREKGKA (80 aa)).

Belongs to the RNA polymerase alpha chain family. As to quaternary structure, in cyanobacteria the RNAP catalytic core is composed of 2 alpha, 1 beta, 1 beta', 1 gamma and 1 omega subunit. When a sigma factor is associated with the core the holoenzyme is formed, which can initiate transcription.

The enzyme catalyses RNA(n) + a ribonucleoside 5'-triphosphate = RNA(n+1) + diphosphate. Functionally, DNA-dependent RNA polymerase catalyzes the transcription of DNA into RNA using the four ribonucleoside triphosphates as substrates. The chain is DNA-directed RNA polymerase subunit alpha from Synechococcus sp. (strain JA-2-3B'a(2-13)) (Cyanobacteria bacterium Yellowstone B-Prime).